A 186-amino-acid chain; its full sequence is ATP synthase subunit delta, chloroplastic (186 aa).

This sequence belongs to the ATPase delta chain family. As to quaternary structure, F-type ATPases have 2 components, F(1) - the catalytic core - and F(0) - the membrane proton channel. F(1) has five subunits: alpha(3), beta(3), gamma(1), delta(1), epsilon(1). CF(0) has four main subunits: a(1), b(1), b'(1) and c(10-14). The alpha and beta chains form an alternating ring which encloses part of the gamma chain. F(1) is attached to F(0) by a central stalk formed by the gamma and epsilon chains, while a peripheral stalk is formed by the delta, b and b' chains.

The protein localises to the plastid. It localises to the chloroplast thylakoid membrane. F(1)F(0) ATP synthase produces ATP from ADP in the presence of a proton or sodium gradient. F-type ATPases consist of two structural domains, F(1) containing the extramembraneous catalytic core and F(0) containing the membrane proton channel, linked together by a central stalk and a peripheral stalk. During catalysis, ATP synthesis in the catalytic domain of F(1) is coupled via a rotary mechanism of the central stalk subunits to proton translocation. Functionally, this protein is part of the stalk that links CF(0) to CF(1). It either transmits conformational changes from CF(0) to CF(1) or is implicated in proton conduction. This chain is ATP synthase subunit delta, chloroplastic, found in Pyropia yezoensis (Susabi-nori).